A 417-amino-acid polypeptide reads, in one-letter code: Serine hydroxymethyltransferase (417 aa).

Residues leucine 121 and 125 to 127 (GHL) contribute to the (6S)-5,6,7,8-tetrahydrofolate site. At lysine 229 the chain carries N6-(pyridoxal phosphate)lysine. 355 to 357 (SPF) serves as a coordination point for (6S)-5,6,7,8-tetrahydrofolate.

It belongs to the SHMT family. As to quaternary structure, homodimer. Pyridoxal 5'-phosphate is required as a cofactor.

It localises to the cytoplasm. It carries out the reaction (6R)-5,10-methylene-5,6,7,8-tetrahydrofolate + glycine + H2O = (6S)-5,6,7,8-tetrahydrofolate + L-serine. It functions in the pathway one-carbon metabolism; tetrahydrofolate interconversion. The protein operates within amino-acid biosynthesis; glycine biosynthesis; glycine from L-serine: step 1/1. Functionally, catalyzes the reversible interconversion of serine and glycine with tetrahydrofolate (THF) serving as the one-carbon carrier. This reaction serves as the major source of one-carbon groups required for the biosynthesis of purines, thymidylate, methionine, and other important biomolecules. Also exhibits THF-independent aldolase activity toward beta-hydroxyamino acids, producing glycine and aldehydes, via a retro-aldol mechanism. In Buchnera aphidicola subsp. Acyrthosiphon pisum (strain 5A), this protein is Serine hydroxymethyltransferase.